The primary structure comprises 546 residues: Inosine-5'-monophosphate dehydrogenase (546 aa).

CBS domains lie at 135-197 (FILD…VTAI) and 198-254 (MSTD…PLAS). NAD(+)-binding positions include 292 to 294 (DSS) and 342 to 344 (GMG). K(+)-binding residues include Gly344 and Gly346. Ser347 serves as a coordination point for IMP. Position 349 (Cys349) interacts with K(+). Cys349 functions as the Thioimidate intermediate in the catalytic mechanism. IMP-binding positions include 382–384 (DGG), 405–406 (GG), and 430–434 (YRGMG). Catalysis depends on Arg460, which acts as the Proton acceptor. Gln472 is an IMP binding site. The K(+) site is built by Glu531 and Gly532.

It belongs to the IMPDH/GMPR family. Homotetramer. K(+) is required as a cofactor.

The protein resides in the cytoplasm. The enzyme catalyses IMP + NAD(+) + H2O = XMP + NADH + H(+). Its pathway is purine metabolism; XMP biosynthesis via de novo pathway; XMP from IMP: step 1/1. With respect to regulation, mycophenolic acid (MPA) is a non-competitive inhibitor that prevents formation of the closed enzyme conformation by binding to the same site as the amobile flap. In contrast, mizoribine monophosphate (MZP) is a competitive inhibitor that induces the closed conformation. MPA is a potent inhibitor of mammalian IMPDHs but a poor inhibitor of the bacterial enzymes. MZP is a more potent inhibitor of bacterial IMPDH. Functionally, catalyzes the conversion of inosine 5'-phosphate (IMP) to xanthosine 5'-phosphate (XMP), the first committed and rate-limiting step in the de novo synthesis of guanine nucleotides, and therefore plays an important role in the regulation of cell growth. This chain is Inosine-5'-monophosphate dehydrogenase, found in Aspergillus fumigatus (strain ATCC MYA-4609 / CBS 101355 / FGSC A1100 / Af293) (Neosartorya fumigata).